The primary structure comprises 128 residues: Sulfurtransferase TusD (128 aa).

The active-site Cysteine persulfide intermediate is the Cys78.

The protein belongs to the DsrE/TusD family. Heterohexamer, formed by a dimer of trimers. The hexameric TusBCD complex contains 2 copies each of TusB, TusC and TusD. The TusBCD complex interacts with TusE.

Its subcellular location is the cytoplasm. Functionally, part of a sulfur-relay system required for 2-thiolation of 5-methylaminomethyl-2-thiouridine (mnm(5)s(2)U) at tRNA wobble positions. Accepts sulfur from TusA and transfers it in turn to TusE. The polypeptide is Sulfurtransferase TusD (Salmonella dublin (strain CT_02021853)).